The sequence spans 558 residues: Membrane transporter D2 (558 aa).

Positions 1–28 are disordered; the sequence is MTLKKRSSAPELPTSLDEDEEEDSPQPL. Residues 1 to 38 lie on the Cytoplasmic side of the membrane; the sequence is MTLKKRSSAPELPTSLDEDEEEDSPQPLSNTPFFSMKN. The chain crosses the membrane as a helical span at residues 39–59; that stretch reads LIVATPIILTPLLYGYNLGFV. Topologically, residues 60-152 are extracellular; sequence GPYSTMYGYA…QVGYSSIQSG (93 aa). The helical transmembrane segment at 153 to 173 threads the bilayer; that stretch reads VFAGSLVIGSTMGALMGGYLT. At 174 to 179 the chain is on the cytoplasmic side; that stretch reads KRLDYC. Residues 180–200 form a helical membrane-spanning segment; sequence KSFLFIGLLSVIGNVLTHVAT. The Extracellular portion of the chain corresponds to 201–204; the sequence is GLFH. A helical membrane pass occupies residues 205-225; the sequence is YWVLFVARIVLGFPLGWQSIT. The Cytoplasmic segment spans residues 226–241; the sequence is SSHYTDKFAPANHAKT. Residues 242–262 traverse the membrane as a helical segment; that stretch reads LGTLFQVSVSTGIFVTSFFGL. Residues 263 to 281 are Extracellular-facing; it reads VLGNTIQYDAASNANTMGR. Residues 282-302 traverse the membrane as a helical segment; sequence MQGLVSVSTLLSIFVVFLPLI. At 303 to 335 the chain is on the cytoplasmic side; that stretch reads TKDGYSKSRRGDYEGENSEDASRKAAEEYTMTQ. A helical membrane pass occupies residues 336–356; that stretch reads MIGPILNGVAMGCVTQLTGIN. Residues 357–373 lie on the Extracellular side of the membrane; that stretch reads ANMNFAPTIMSNLGLQP. Residues 374-394 form a helical membrane-spanning segment; sequence LVGNIIVMAWNMLATFCVIPL. The Cytoplasmic portion of the chain corresponds to 395 to 402; that stretch reads SRRFSMRT. Residues 403–423 traverse the membrane as a helical segment; the sequence is LFLFCGFVGSLCCVFLGGIPV. Residues 424 to 441 lie on the Extracellular side of the membrane; it reads YPGVTKSDKAISGIAITG. Residues 442-463 traverse the membrane as a helical segment; the sequence is IAIFIALYEMGVGPCFYVLAVD. The Cytoplasmic portion of the chain corresponds to 464–478; the sequence is VFPESFRPIGSSITV. Residues 479-499 form a helical membrane-spanning segment; that stretch reads GVMFIFNLIINICYPIATEGI. Residues 500–512 are Extracellular-facing; sequence SGGPSGNPNKGQA. A helical membrane pass occupies residues 513 to 533; that stretch reads VAFIFFGCIGVVACVIEYFFL. The Cytoplasmic portion of the chain corresponds to 534-558; sequence QPWVEPEAKMTDDLDGAAVPEGKHD.

Belongs to the major facilitator superfamily. Sugar transporter (TC 2.A.1.1) family.

The protein resides in the membrane. This is Membrane transporter D2 from Leishmania donovani.